The chain runs to 87 residues: Kappa-6-bungarotoxin (87 aa).

The signal sequence occupies residues 1–21 (MKTLLLSLVVVTIVCLDLGYT). 5 disulfide bridges follow: cysteine 24/cysteine 42, cysteine 35/cysteine 63, cysteine 48/cysteine 52, cysteine 67/cysteine 79, and cysteine 80/cysteine 85.

The protein belongs to the three-finger toxin family. Long-chain subfamily. Kappa-neurotoxin sub-subfamily. As to quaternary structure, homo- and heterodimer; non-covalently linked. In terms of tissue distribution, expressed by the venom gland.

The protein localises to the secreted. Its function is as follows. Postsynaptic neurotoxin that binds and inhibits neuronal nicotinic acetylcholine receptors (nAChR) with high affinity (IC(50)&lt;100 nM). Is a selective, and slowly reversible antagonist of alpha-3/CHRNA3-containing and some alpha-4/CHRNA4-containing AChRs. This chain is Kappa-6-bungarotoxin, found in Bungarus multicinctus (Many-banded krait).